The chain runs to 440 residues: Virion host shutoff protein (440 aa).

Disordered regions lie at residues 98 to 144 and 265 to 312; these read NIDH…RRKT and IDEP…AGPG. The segment covering 266–281 has biased composition (low complexity); that stretch reads DEPPAASEESSASDQQ.

The protein belongs to the herpesviridae VHS protein family.

The protein resides in the virion. Minor structural protein that acts as an endoribonuclease during lytic infection. Degrades host mRNAs in the cytoplasm by cutting them at preferred sites, including some in regions of translation initiation. In Amazona oratrix (yellow-headed parrot), this protein is Virion host shutoff protein (UL41).